A 263-amino-acid chain; its full sequence is Isatin hydrolase (263 aa).

62–66 (FFAWN) lines the substrate pocket. Residues His-73, His-77, and Asp-79 each coordinate Mn(2+). His-83 serves as the catalytic Proton donor/acceptor. His-212 serves as a coordination point for substrate.

It belongs to the Cyclase 1 superfamily. As to quaternary structure, homodimer. It depends on Mn(2+) as a cofactor.

It catalyses the reaction isatin + H2O = isatinate + H(+). Inhibited by thioisatinate. Functionally, involved in the degradation of the plant hormone indole-3-acetic acid (IAA). Catalyzes the hydrolysis of the cyclic amide bond (lactam) of isatin (1H-indole-2,3-dione) to yield isatinate (2-(2-aminophenyl)-2-oxoacetate). In Roseibium aggregatum (strain ATCC 25650 / DSM 13394 / JCM 20685 / NBRC 16684 / NCIMB 2208 / IAM 12614 / B1) (Stappia aggregata), this protein is Isatin hydrolase.